Here is a 473-residue protein sequence, read N- to C-terminus: 3-isopropylmalate dehydratase large subunit (473 aa).

Cysteine 354, cysteine 414, and cysteine 417 together coordinate [4Fe-4S] cluster.

It belongs to the aconitase/IPM isomerase family. LeuC type 1 subfamily. As to quaternary structure, heterodimer of LeuC and LeuD. The cofactor is [4Fe-4S] cluster.

It carries out the reaction (2R,3S)-3-isopropylmalate = (2S)-2-isopropylmalate. The protein operates within amino-acid biosynthesis; L-leucine biosynthesis; L-leucine from 3-methyl-2-oxobutanoate: step 2/4. Catalyzes the isomerization between 2-isopropylmalate and 3-isopropylmalate, via the formation of 2-isopropylmaleate. This is 3-isopropylmalate dehydratase large subunit from Rhodopseudomonas palustris (strain BisB18).